A 445-amino-acid polypeptide reads, in one-letter code: UPF0210 protein Sez_0396 (445 aa).

It belongs to the UPF0210 family. In terms of assembly, homodimer.

This chain is UPF0210 protein Sez_0396, found in Streptococcus equi subsp. zooepidemicus (strain MGCS10565).